A 142-amino-acid polypeptide reads, in one-letter code: Hemoglobin subunit alpha (142 aa).

Residues Val2 to Arg142 enclose the Globin domain. Ser4 carries the phosphoserine modification. An N6-succinyllysine mark is found at Lys8 and Lys12. Lys17 is subject to N6-acetyllysine; alternate. The residue at position 17 (Lys17) is an N6-succinyllysine; alternate. Residue Tyr25 is modified to Phosphotyrosine. Ser36 bears the Phosphoserine mark. Residue Lys41 is modified to N6-succinyllysine. Ser50 is modified (phosphoserine). His59 provides a ligand contact to O2. His88 contacts heme b. Residue Ser103 is modified to Phosphoserine. Thr109 bears the Phosphothreonine mark. The residue at position 125 (Ser125) is a Phosphoserine. Residues Thr135 and Thr138 each carry the phosphothreonine modification. Ser139 carries the post-translational modification Phosphoserine.

The protein belongs to the globin family. As to quaternary structure, heterotetramer of two alpha chains and two beta chains. Red blood cells.

Functionally, involved in oxygen transport from the lung to the various peripheral tissues. Hemopressin acts as an antagonist peptide of the cannabinoid receptor CNR1. Hemopressin-binding efficiently blocks cannabinoid receptor CNR1 and subsequent signaling. This chain is Hemoglobin subunit alpha (HBA), found in Alces alces alces (European moose).